We begin with the raw amino-acid sequence, 357 residues long: CD4+ T-cell-stimulating antigen (357 aa).

An N-terminal signal peptide occupies residues 1–22; it reads MKKRTFALALSMIIASGVVLGA. C23 carries the N-palmitoyl cysteine lipid modification. C23 carries S-diacylglycerol cysteine lipidation.

The protein belongs to the BMP lipoprotein family.

Its subcellular location is the cell membrane. This chain is CD4+ T-cell-stimulating antigen (tcsA), found in Listeria innocua serovar 6a (strain ATCC BAA-680 / CLIP 11262).